A 322-amino-acid chain; its full sequence is Pantothenate kinase (322 aa).

G100–S107 lines the ATP pocket.

This sequence belongs to the prokaryotic pantothenate kinase family.

It localises to the cytoplasm. The enzyme catalyses (R)-pantothenate + ATP = (R)-4'-phosphopantothenate + ADP + H(+). It participates in cofactor biosynthesis; coenzyme A biosynthesis; CoA from (R)-pantothenate: step 1/5. The chain is Pantothenate kinase from Agrobacterium fabrum (strain C58 / ATCC 33970) (Agrobacterium tumefaciens (strain C58)).